The following is a 443-amino-acid chain: Threonine/serine transporter TdcC (443 aa).

A run of 11 helical transmembrane segments spans residues 22 to 42, 44 to 64, 97 to 117, 140 to 160, 163 to 183, 207 to 227, 261 to 281, 312 to 332, 366 to 386, 389 to 409, and 423 to 443; these read TTWT…FFPI, AGFG…PIAF, GVVI…IYGV, FVAL…KDLM, VMSY…LSLI, ILIT…FSPI, MLMV…LSPA, AITL…KSFF, ISMI…PNIL, IEAM…MYAI, and DNVF…YKLF.

Belongs to the amino acid/polyamine transporter 2 family. SdaC/TdcC subfamily.

It is found in the cell inner membrane. It catalyses the reaction L-threonine(in) + H(+)(in) = L-threonine(out) + H(+)(out). It carries out the reaction L-serine(in) + H(+)(in) = L-serine(out) + H(+)(out). Functionally, involved in the import of threonine and serine into the cell, with the concomitant import of a proton (symport system). The polypeptide is Threonine/serine transporter TdcC (Escherichia coli O45:K1 (strain S88 / ExPEC)).